A 160-amino-acid chain; its full sequence is Transcription antitermination protein NusB (160 aa).

It belongs to the NusB family.

Its function is as follows. Involved in transcription antitermination. Required for transcription of ribosomal RNA (rRNA) genes. Binds specifically to the boxA antiterminator sequence of the ribosomal RNA (rrn) operons. In Rhizobium johnstonii (strain DSM 114642 / LMG 32736 / 3841) (Rhizobium leguminosarum bv. viciae), this protein is Transcription antitermination protein NusB.